Reading from the N-terminus, the 386-residue chain is Succinate--CoA ligase [ADP-forming] subunit beta (386 aa).

Positions 9-244 constitute an ATP-grasp domain; it reads KAVLRSYGVS…LEEEDSKEIE (236 aa). Residues Lys46, 53–55, Glu99, Cys102, and Glu107 each bind ATP; that span reads GRG. Residues Asn199 and Asp213 each coordinate Mg(2+). Residues Asn264 and 321 to 323 contribute to the substrate site; that span reads GIM.

This sequence belongs to the succinate/malate CoA ligase beta subunit family. In terms of assembly, heterotetramer of two alpha and two beta subunits. Mg(2+) serves as cofactor.

The enzyme catalyses succinate + ATP + CoA = succinyl-CoA + ADP + phosphate. The catalysed reaction is GTP + succinate + CoA = succinyl-CoA + GDP + phosphate. Its pathway is carbohydrate metabolism; tricarboxylic acid cycle; succinate from succinyl-CoA (ligase route): step 1/1. Succinyl-CoA synthetase functions in the citric acid cycle (TCA), coupling the hydrolysis of succinyl-CoA to the synthesis of either ATP or GTP and thus represents the only step of substrate-level phosphorylation in the TCA. The beta subunit provides nucleotide specificity of the enzyme and binds the substrate succinate, while the binding sites for coenzyme A and phosphate are found in the alpha subunit. The sequence is that of Succinate--CoA ligase [ADP-forming] subunit beta from Bacillus mycoides (strain KBAB4) (Bacillus weihenstephanensis).